The primary structure comprises 399 residues: Protein DDI1 homolog 2 (399 aa).

The region spanning 1-81 (MLLTVYCVRR…VILRQKENAD (81 aa)) is the Ubiquitin-like domain. The segment at 99–134 (IAVPGTSNPQQRQLPRTQAQHSSPGEMASSPQGLDN) is disordered. Residues 103-131 (GTSNPQQRQLPRTQAQHSSPGEMASSPQG) show a composition bias toward polar residues. At Thr104 the chain carries Phosphothreonine. A phosphoserine mark is found at Ser121, Ser128, Ser150, and Ser194. The active site involves Asp252. The Ubiquitin-binding signature appears at 376 to 395 (EEIADQELAEAIQKSAEDAE).

Belongs to the DDI1 family. Homodimer.

The protein resides in the cytoplasm. It localises to the cytosol. The protein localises to the chromosome. Functionally, aspartic protease that mediates the cleavage of NFE2L1/NRF1 at 'Leu-104', thereby promoting release of NFE2L1/NRF1 from the endoplasmic reticulum membrane. Ubiquitination of NFE2L1/NRF1 is a prerequisite for cleavage, suggesting that DDI2 specifically recognizes and binds ubiquitinated NFE2L1/NRF1. Seems to act as a proteasomal shuttle which links the proteasome and replication fork proteins like RTF2. Required, with DDI1, for cellular survival following replication stress. Together or redudantly with DDI1, removes RTF2 from stalled forks to allow cell cycle progression after replication stress and maintains genome integrity. In Mus musculus (Mouse), this protein is Protein DDI1 homolog 2.